The sequence spans 881 residues: Putative leucine-rich repeat receptor-like protein kinase At2g19210 (881 aa).

The first 25 residues, 1 to 25, serve as a signal peptide directing secretion; that stretch reads MVHYNFLSLIIFACFFAVFVLLVRA. The Extracellular segment spans residues 26-518; that stretch reads QDQSGFVSID…SDEKTKKNVY (493 aa). N-linked (GlcNAc...) asparagine glycans are attached at residues asparagine 143, asparagine 234, asparagine 295, asparagine 310, asparagine 404, asparagine 419, asparagine 435, asparagine 446, and asparagine 462. LRR repeat units follow at residues 438 to 460 and 462 to 483; these read LLHI…LGNL and NLTE…KLLE. A helical membrane pass occupies residues 519 to 539; it reads IIPLVASVVGVLGLVLAIALF. The Cytoplasmic portion of the chain corresponds to 540–881; sequence LLYKKRHRRG…FDSGMFPQAR (342 aa). In terms of domain architecture, Protein kinase spans 576 to 850; it reads NNFERVLGQG…HVVAELKESV (275 aa). Residues 582–590 and lysine 603 each bind ATP; that span reads LGQGGFGKV. Tyrosine 648 bears the Phosphotyrosine mark. Aspartate 699 serves as the catalytic Proton acceptor. 2 positions are modified to phosphothreonine: threonine 734 and threonine 739. The residue at position 747 (tyrosine 747) is a Phosphotyrosine. Positions 851–881 are disordered; it reads SRARAGGGSGASSVTDPAMTNFDSGMFPQAR.

Belongs to the protein kinase superfamily. Ser/Thr protein kinase family.

The protein resides in the cell membrane. The catalysed reaction is L-seryl-[protein] + ATP = O-phospho-L-seryl-[protein] + ADP + H(+). It carries out the reaction L-threonyl-[protein] + ATP = O-phospho-L-threonyl-[protein] + ADP + H(+). The sequence is that of Putative leucine-rich repeat receptor-like protein kinase At2g19210 from Arabidopsis thaliana (Mouse-ear cress).